We begin with the raw amino-acid sequence, 1040 residues long: Multidrug resistance protein MdtB (1040 aa).

The next 12 helical transmembrane spans lie at 16–36 (FIMR…AGII), 347–367 (LMMA…NIPA), 369–389 (IIPG…MVFL), 396–416 (LTLM…IVVI), 440–460 (IGFT…PLLF), 472–492 (FAIT…TLTP), 537–557 (WLTL…WVFI), 863–883 (LGST…VLGI), 888–908 (FIHP…ALLA), 911–931 (IAGS…IGIV), 968–988 (ILMT…STGV), and 998–1018 (IGMV…TPVI).

This sequence belongs to the resistance-nodulation-cell division (RND) (TC 2.A.6) family. MdtB subfamily. As to quaternary structure, part of a tripartite efflux system composed of MdtA, MdtB and MdtC. MdtB forms a heteromultimer with MdtC.

It is found in the cell inner membrane. The MdtABC tripartite complex confers resistance against novobiocin and deoxycholate. The chain is Multidrug resistance protein MdtB from Escherichia fergusonii (strain ATCC 35469 / DSM 13698 / CCUG 18766 / IAM 14443 / JCM 21226 / LMG 7866 / NBRC 102419 / NCTC 12128 / CDC 0568-73).